A 2718-amino-acid polypeptide reads, in one-letter code: Zinc finger protein 40 (2718 aa).

3 disordered regions span residues 58–182, 210–256, and 335–373; these read HLKK…CISS, LSQK…AESQ, and GLTSPSSRSQVTPQNQQMDSASPLSISPANSTQSPPMPI. Serine 141 bears the Phosphoserine mark. A compositionally biased stretch (basic and acidic residues) spans 142–158; sequence ELRRWRSEGADPAKFSD. Polar residues-rich tracts occupy residues 164–182 and 237–256; these read DSSSLSSKTRTDNSECISS and KNSSMDAPNQTSQELVAESQ. Residues 406–428 form a C2H2-type 1 zinc finger; sequence YICEYCNRACAKPSVLLKHIRSH. Threonine 429 carries the phosphothreonine modification. A C2H2-type 2 zinc finger spans residues 434–456; that stretch reads YPCVTCGFSFKTKSNLYKHKKSH. Phosphoserine occurs at positions 476, 479, 492, 495, 571, and 577. Positions 484–511 are disordered; it reads SIHSDVEDSGESEEEGATDERQHDLGAM. The segment covering 490-500 has biased composition (acidic residues); sequence EDSGESEEEGA. The interval 574–727 is disordered; that stretch reads RTDSPKAMDP…TPSALPTGEK (154 aa). Positions 576 to 585 are enriched in basic and acidic residues; that stretch reads DSPKAMDPKP. The span at 588–612 shows a compositional bias: polar residues; that stretch reads SSAQKQKDLQVTNVQPLSANMSQGG. Basic and acidic residues predominate over residues 617–626; it reads ETNENSHQKG. Composition is skewed to polar residues over residues 644-687 and 698-721; these read AQLQ…QTVS and STEQDSGRSNGPSAALVTTSTPSA. Phosphoserine is present on residues serine 670 and serine 681. The CCHC HIVEP-type zinc-finger motif lies at 956–986; it reads GTMFECETCRNRYRKLENFENHKKFYCSELH. The disordered stretch occupies residues 1022–1062; sequence WEQTPQIRKRRKMKSVGDDEELQQNESGTSPKSSEGLQFQN. Phosphoserine occurs at positions 1036, 1051, 1091, 1158, 1161, and 1180. A compositionally biased stretch (polar residues) spans 1045-1062; the sequence is QNESGTSPKSSEGLQFQN. Positions 1138–1169 are disordered; that stretch reads HTNSLSRPNSFDKPEPFERASPVSFQELNRTG. The segment covering 1160–1169 has biased composition (polar residues); the sequence is VSFQELNRTG. 2 stretches are compositionally biased toward basic and acidic residues: residues 1202–1219 and 1246–1259; these read LRGELQESSRKSPSERHV and DLEAQCHDQEKSEK. 3 disordered regions span residues 1202–1282, 1384–1414, and 1523–1548; these read LRGE…PKKK, RSKSFDCGSITPPQTTPLTELQPPSSPSRVG, and SHQSTQLSLQVSTQGSKPDKNSVLSG. At threonine 1268 the chain carries Phosphothreonine. 2 stretches are compositionally biased toward low complexity: residues 1394–1406 and 1523–1536; these read TPPQTTPLTELQP and SHQSTQLSLQVSTQ. A phosphoserine mark is found at serine 1735, serine 1740, serine 1749, and serine 1753. Residues 1871 to 1883 are compositionally biased toward polar residues; the sequence is VRSSPAPSENTHI. The tract at residues 1871–1911 is disordered; the sequence is VRSSPAPSENTHISPLKCTDNNQERKSPGVKNQGDKVNIQE. A phosphoserine mark is found at serine 1884 and serine 2033. 2 C2H2-type zinc fingers span residues 2088–2110 and 2116–2140; these read YICEECGIRCKKPSMLKKHIRTH and YHCTYCNFSFKTKGNLTKHMKSKAH. Disordered stretches follow at residues 2155-2228, 2265-2303, 2327-2381, and 2572-2718; these read DEQD…PVST, SDYNRKTLSPGKARQRAARDENDTIPSVDTSRSPCHQMS, SPSS…THLF, and PASQ…VIAT. Basic and acidic residues predominate over residues 2164–2175; the sequence is EKQRFSYERSGY. Positions 2176–2198 are enriched in acidic residues; it reads DLEESDGPDEDDNENEDDDEDSQ. Polar residues-rich tracts occupy residues 2199 to 2226 and 2288 to 2300; these read AESVLSATPSVTASPQHLPSRSSLQDPV and TIPSVDTSRSPCH. Phosphoserine occurs at positions 2327 and 2599. The span at 2573 to 2608 shows a compositional bias: polar residues; it reads ASQSKACETQPKQTSVASANQVSRTESPQGLPTVQR. Over residues 2623 to 2637 the composition is skewed to basic and acidic residues; it reads DHARLDGLSKMDTEK. Residues 2651–2663 show a composition bias toward polar residues; it reads TSIQGQPASTSQP. Residues serine 2669 and serine 2682 each carry the phosphoserine modification.

As to quaternary structure, interacts with UTP4.

Its subcellular location is the nucleus. It localises to the cytoplasm. This protein specifically binds to the DNA sequence 5'-GGGACTTTCC-3' which is found in the enhancer elements of numerous viral promoters such as those of SV40, CMV, or HIV-1. In addition, related sequences are found in the enhancer elements of a number of cellular promoters, including those of the class I MHC, interleukin-2 receptor, and interferon-beta genes. It may act in T-cell activation. Involved in activating HIV-1 gene expression. Isoform 2 and isoform 3 also bind to the IPCS (IRF1 and p53 common sequence) DNA sequence in the promoter region of interferon regulatory factor 1 and p53 genes and are involved in transcription regulation of these genes. Isoform 2 does not activate HIV-1 gene expression. Isoform 2 and isoform 3 may be involved in apoptosis. This chain is Zinc finger protein 40 (HIVEP1), found in Homo sapiens (Human).